The primary structure comprises 333 residues: Probable 4-hydroxyproline 2-epimerase (333 aa).

C90 serves as the catalytic Proton acceptor. Substrate contacts are provided by residues 91–92, H223, and D249; that span reads GH. The active-site Proton donor is the C253. Position 254–255 (254–255) interacts with substrate; that stretch reads GT.

This sequence belongs to the proline racemase family.

It carries out the reaction trans-4-hydroxy-L-proline = cis-4-hydroxy-D-proline. Functionally, likely catalyzes the epimerization of trans-4-hydroxy-L-proline (t4LHyp) to cis-4-hydroxy-D-proline (c4DHyp). May be involved in the degradation pathway that converts t4LHyp to alpha-ketoglutarate, which would allow R.meliloti to grow on t4LHyp as a sole carbon source. This Rhizobium meliloti (strain 1021) (Ensifer meliloti) protein is Probable 4-hydroxyproline 2-epimerase.